The sequence spans 648 residues: 1-deoxy-D-xylulose-5-phosphate synthase 1 (648 aa).

Residues H82 and A123–S125 contribute to the thiamine diphosphate site. D154 is a binding site for Mg(2+). Thiamine diphosphate is bound by residues G155–S156, N183, Y292, and E374. N183 serves as a coordination point for Mg(2+).

Belongs to the transketolase family. DXPS subfamily. In terms of assembly, homodimer. Mg(2+) is required as a cofactor. Requires thiamine diphosphate as cofactor.

The enzyme catalyses D-glyceraldehyde 3-phosphate + pyruvate + H(+) = 1-deoxy-D-xylulose 5-phosphate + CO2. It functions in the pathway metabolic intermediate biosynthesis; 1-deoxy-D-xylulose 5-phosphate biosynthesis; 1-deoxy-D-xylulose 5-phosphate from D-glyceraldehyde 3-phosphate and pyruvate: step 1/1. Functionally, catalyzes the acyloin condensation reaction between C atoms 2 and 3 of pyruvate and glyceraldehyde 3-phosphate to yield 1-deoxy-D-xylulose-5-phosphate (DXP). The polypeptide is 1-deoxy-D-xylulose-5-phosphate synthase 1 (Cereibacter sphaeroides (strain ATCC 17023 / DSM 158 / JCM 6121 / CCUG 31486 / LMG 2827 / NBRC 12203 / NCIMB 8253 / ATH 2.4.1.) (Rhodobacter sphaeroides)).